The chain runs to 441 residues: Aminopeptidase C (441 aa).

Active-site residues include C70, H361, and N382.

It belongs to the peptidase C1 family.

It catalyses the reaction Inactivates bleomycin B2 (a cytotoxic glycometallopeptide) by hydrolysis of a carboxyamide bond of beta-aminoalanine, but also shows general aminopeptidase activity. The specificity varies somewhat with source, but amino acid arylamides of Met, Leu and Ala are preferred.. This is Aminopeptidase C (pepC) from Listeria monocytogenes serovar 1/2a (strain ATCC BAA-679 / EGD-e).